Reading from the N-terminus, the 854-residue chain is Glucans biosynthesis glucosyltransferase H (854 aa).

Transmembrane regions (helical) follow at residues 155–175 (ILLVLTLFQTAIATWYMKTIL), 209–229 (ILVLFAVLFCWVSAGFWTALM), 528–548 (VFLTGVMSYLSAPLWFMFLML), 583–603 (IALFSTTLVLLFLPKLLSVIL), 619–639 (FISLLLEMLFSVLLAPVRMLF), 671–691 (FVRHGSQLILGLVWAIGMAWL), and 695–715 (FLWWLAPIVFSLILSPFVSVY).

This sequence belongs to the glycosyltransferase 2 family. OpgH subfamily.

Its subcellular location is the cell inner membrane. The protein operates within glycan metabolism; osmoregulated periplasmic glucan (OPG) biosynthesis. Functionally, involved in the biosynthesis of osmoregulated periplasmic glucans (OPGs). This is Glucans biosynthesis glucosyltransferase H from Pectobacterium carotovorum subsp. carotovorum (strain PC1).